Reading from the N-terminus, the 76-residue chain is uncharacterized protein (76 aa).

Residues 6–60 (LKKNRLEKGFTQEEVAKAAQIGRAYYTMIENGTRKPSVIVSKKIGEKLGFDWTIF) form the HTH cro/C1-type domain. A DNA-binding region (H-T-H motif) is located at residues 17 to 36 (QEEVAKAAQIGRAYYTMIEN).

This is an uncharacterized protein from Bacillus subtilis (strain 168).